We begin with the raw amino-acid sequence, 259 residues long: UPF0246 protein PP_1289 (259 aa).

Belongs to the UPF0246 family.

The protein is UPF0246 protein PP_1289 of Pseudomonas putida (strain ATCC 47054 / DSM 6125 / CFBP 8728 / NCIMB 11950 / KT2440).